The chain runs to 68 residues: Prokaryotic ubiquitin-like protein Pup (68 aa).

Residues 1–37 form a disordered region; the sequence is MAQERIFGTGSRREDEPDTPAPVDPPVSGAAQAQRDM. Positions 24 to 62 are ARC ATPase binding; the sequence is DPPVSGAAQAQRDMQGTDDLLAEIDGVLETNAEAFVKGF. Glutamine 68 carries the post-translational modification Deamidated glutamine. An Isoglutamyl lysine isopeptide (Gln-Lys) (interchain with K-? in acceptor proteins) cross-link involves residue glutamine 68.

This sequence belongs to the prokaryotic ubiquitin-like protein family. Strongly interacts with the proteasome-associated ATPase ARC through a hydrophobic interface; the interacting region of Pup lies in its C-terminal half. There is one Pup binding site per ARC hexamer ring. Post-translationally, is modified by deamidation of its C-terminal glutamine to glutamate by the deamidase Dop, a prerequisite to the subsequent pupylation process.

It participates in protein degradation; proteasomal Pup-dependent pathway. Protein modifier that is covalently attached to lysine residues of substrate proteins, thereby targeting them for proteasomal degradation. The tagging system is termed pupylation. The sequence is that of Prokaryotic ubiquitin-like protein Pup from Kocuria rhizophila (strain ATCC 9341 / DSM 348 / NBRC 103217 / DC2201).